The chain runs to 510 residues: MTATPKPLVLIILDGFGHSESHEGNAILAAKMPVMDRLYETMPNGLISGSGMDVGLPDGQMGNSEVGHMNLGAGRVVYQDFTRVTKAIRDGEFFENPTICAAVDKAVGAGKAVHIMGLLSDGGVHSHQGHLVAMAELAVKRGAEKIYLHAFLDGRDTPPRSAKKSLELMDATFARLGKGRTATIIGRYFAMDRDNRWDRVSTAYNLIVDSTAEFHADSGVAGLEAAYARDENDEFVKATRIGEPARVEDGDAVVFMNFRADRARELTRVFVEDDFKDFERARQPKVNYVMLTQYAASIPAPSAFAAGSLKNVLGEYLADNGKTQLRIAETEKYAHVTFFFSGGREEPFPGEERILIPSPKVATYDLQPEMSAPEVTDKIVDAIEHQRYDVIIVNYANGDMVGHSGIMEAAIKAVECLDVCVGRITAALEKVGGEALITADHGNVEQMTDDSTGQAHTAHTSEPVPFVYVGKRPLKVREGGVLADVAPTMLHLLGMEKPQEMTGHSILVAK.

Residues D14 and S64 each contribute to the Mn(2+) site. S64 serves as the catalytic Phosphoserine intermediate. Substrate-binding positions include H125, 155–156, R187, R193, 259–262, and K332; these read RD and RADR. D399, H403, D440, H441, and H459 together coordinate Mn(2+).

Belongs to the BPG-independent phosphoglycerate mutase family. In terms of assembly, monomer. The cofactor is Mn(2+).

The enzyme catalyses (2R)-2-phosphoglycerate = (2R)-3-phosphoglycerate. Its pathway is carbohydrate degradation; glycolysis; pyruvate from D-glyceraldehyde 3-phosphate: step 3/5. In terms of biological role, catalyzes the interconversion of 2-phosphoglycerate and 3-phosphoglycerate. The chain is 2,3-bisphosphoglycerate-independent phosphoglycerate mutase from Pseudomonas savastanoi pv. phaseolicola (strain 1448A / Race 6) (Pseudomonas syringae pv. phaseolicola (strain 1448A / Race 6)).